Consider the following 712-residue polypeptide: Copper amine oxidase 1 (712 aa).

319–330 lines the substrate pocket; the sequence is AFDLGEYGAGYL. Catalysis depends on Asp-321, which acts as the Proton acceptor. A disulfide bridge connects residues Cys-340 and Cys-366. Residue 404–409 coordinates substrate; it reads AANYEY. Catalysis depends on Tyr-407, which acts as the Schiff-base intermediate with substrate; via topaquinone. Residue Tyr-407 is modified to 2',4',5'-topaquinone. Cu cation-binding residues include His-458 and His-460. Positions 616 and 617 each coordinate Mn(2+). A Cu cation-binding site is contributed by His-627.

This sequence belongs to the copper/topaquinone oxidase family. Homodimer. Cu cation serves as cofactor. Zn(2+) is required as a cofactor. The cofactor is L-topaquinone. Requires Mn(2+) as cofactor. In terms of processing, topaquinone (TPQ) is generated by copper-dependent autoxidation of a specific tyrosyl residue.

It is found in the cytoplasm. It carries out the reaction a primary methyl amine + O2 + H2O = an aldehyde + H2O2 + NH4(+). Copper amine oxidase involved in the metabolism of xenobiotic and biogenic amines. Capable of catalyzing the oxidative deamination of primary amines such as ethylamine as alternate sources of nitrogen to support growth. The chain is Copper amine oxidase 1 (cao1) from Schizosaccharomyces pombe (strain 972 / ATCC 24843) (Fission yeast).